A 66-amino-acid chain; its full sequence is Large ribosomal subunit protein uL29 (66 aa).

It belongs to the universal ribosomal protein uL29 family.

In Lachnospira eligens (strain ATCC 27750 / DSM 3376 / VPI C15-48 / C15-B4) (Eubacterium eligens), this protein is Large ribosomal subunit protein uL29.